A 101-amino-acid polypeptide reads, in one-letter code: Apolipoprotein C-II (101 aa).

An N-terminal signal peptide occupies residues 1–22 (MGTRYFLVGFLILLVLGFEAQG). Positions 66–74 (TVDEKIRDI) are lipid binding. Positions 78 to 101 (STAAVTTYAGIITDQVFSILSGED) are lipoprotein lipase cofactor.

Belongs to the apolipoprotein C2 family. In terms of processing, proapolipoprotein C-II is synthesized as a sialic acid containing glycoprotein which is subsequently desialylated prior to its proteolytic processing. Proapolipoprotein C-II, the major form found in plasma undergoes proteolytic cleavage of its N-terminal hexapeptide to generate apolipoprotein C-II, which occurs as the minor form in plasma.

The protein resides in the secreted. Its function is as follows. Component of chylomicrons, very low-density lipoproteins (VLDL), low-density lipoproteins (LDL), and high-density lipoproteins (HDL) in plasma. Plays an important role in lipoprotein metabolism as an activator of lipoprotein lipase. Both proapolipoprotein C-II and apolipoprotein C-II can activate lipoprotein lipase. The protein is Apolipoprotein C-II (APOC2) of Capra hircus aegagrus (Wild goat).